A 323-amino-acid chain; its full sequence is Aquaporin-4 (323 aa).

Residues 1 to 36 lie on the Cytoplasmic side of the membrane; the sequence is MSDGAAARRWGKCGPPCSRESIMVAFKGVWTQAFWK. 2 S-palmitoyl cysteine lipidation sites follow: C13 and C17. Residues 37 to 57 form a helical membrane-spanning segment; the sequence is AVTAEFLAMLIFVLLSVGSTI. Topologically, residues 58-69 are extracellular; that stretch reads NWGGSENPLPVD. A helical membrane pass occupies residues 70–89; that stretch reads MVLISLCFGLSIATMVQCFG. Over 90–93 the chain is Cytoplasmic; it reads HISG. The segment at residues 94–101 is an intramembrane region (discontinuously helical); it reads GHINPAVT. The NPA 1 signature appears at 97-99; the sequence is NPA. The Cytoplasmic portion of the chain corresponds to 102–115; the sequence is VAMVCTRKISIAKS. At S111 the chain carries Phosphoserine; by PKG. The chain crosses the membrane as a helical span at residues 116 to 136; sequence VFYITAQCLGAIIGAGILYLV. The Extracellular portion of the chain corresponds to 137 to 155; the sequence is TPPSVVGGLGVTTVHGNLT. N153 carries an N-linked (GlcNAc...) asparagine glycan. A helical transmembrane segment spans residues 156–176; that stretch reads AGHGLLVELIITFQLVFTIFA. Topologically, residues 177 to 184 are cytoplasmic; that stretch reads SCDSKRTD. Residue S180 is modified to Phosphoserine; by PKC. A helical transmembrane segment spans residues 185 to 205; sequence VTGSVALAIGFSVAIGHLFAI. The Extracellular segment spans residues 206 to 208; the sequence is NYT. Residues 209-222 constitute an intramembrane region (discontinuously helical); it reads GASMNPARSFGPAV. Positions 213–215 match the NPA 2 motif; sequence NPA. Over 223–231 the chain is Extracellular; sequence IMGNWENHW. Residues 232 to 252 traverse the membrane as a helical segment; that stretch reads IYWVGPIIGAVLAGALYEYVF. The Cytoplasmic segment spans residues 253-323; the sequence is CPDVELKRRL…DSSGEVLSSV (71 aa). Phosphoserine occurs at positions 276 and 285. The residue at position 289 (T289) is a Phosphothreonine. S321 bears the Phosphoserine mark.

It belongs to the MIP/aquaporin (TC 1.A.8) family. As to quaternary structure, homotetramer. The tetramers can form oligomeric arrays in membranes. The size of the oligomers differs between tissues and is smaller in skeletal muscle than in brain. Interaction between AQP4 oligomeric arrays in close-by cells can contribute to cell-cell adhesion. Part of a complex containing MLC1, TRPV4, HEPACAM and ATP1B1. Phosphorylation by PKC at Ser-180 promotes internalization from the cell membrane, reducing the conductance by 50%. Phosphorylation by PKG at Ser-111 in response to glutamate increases conductance by 40%. Post-translationally, isoform Long: Palmitoylated on its N-terminal region. Isoform 3: Not palmitoylated. In terms of tissue distribution, detected in cerebellum. Detected on pericapillary astrocyte endfeet in cerebellum, and in skeletal muscle. Detected in glial lamellae in the hypothalamus (at protein level). Abundant in mature brain cortex, cerebellum and spinal cord. Highly expressed in the ependymal cell lining the aqueductal system and over the space of the brain in contact with the subarachnoid space. Detected in paraventricular and supraoptic nuclei, the granule cell layer of the dentate gyrus and the Purkinje cell layer in the cerebellum. Only weakly detectable in eye, kidney, intestine, and lung.

Its subcellular location is the cell membrane. The protein localises to the basolateral cell membrane. The protein resides in the endosome membrane. It is found in the sarcolemma. It localises to the cell projection. The enzyme catalyses H2O(in) = H2O(out). In terms of biological role, forms a water-specific channel. Plays an important role in brain water homeostasis and in glymphatic solute transport. Required for a normal rate of water exchange across the blood brain interface. Required for normal levels of cerebrospinal fluid influx into the brain cortex and parenchyma along paravascular spaces that surround penetrating arteries, and for normal drainage of interstitial fluid along paravenous drainage pathways. Thereby, it is required for normal clearance of solutes from the brain interstitial fluid, including soluble beta-amyloid peptides derived from APP. Plays a redundant role in urinary water homeostasis and urinary concentrating ability. This chain is Aquaporin-4 (Aqp4), found in Rattus norvegicus (Rat).